The primary structure comprises 175 residues: Adenine phosphoribosyltransferase (175 aa).

The protein belongs to the purine/pyrimidine phosphoribosyltransferase family. As to quaternary structure, homodimer.

It localises to the cytoplasm. The catalysed reaction is AMP + diphosphate = 5-phospho-alpha-D-ribose 1-diphosphate + adenine. It functions in the pathway purine metabolism; AMP biosynthesis via salvage pathway; AMP from adenine: step 1/1. Its function is as follows. Catalyzes a salvage reaction resulting in the formation of AMP, that is energically less costly than de novo synthesis. In Clavibacter michiganensis subsp. michiganensis (strain NCPPB 382), this protein is Adenine phosphoribosyltransferase.